We begin with the raw amino-acid sequence, 691 residues long: MSQIPQAVRERADTLHQQLDDANYQYYVEDDPRITDAEYDALLRELQSLEAEHPELKTPDSPTQRVGAAPAERFEEVTHAVPMLSLDNAFDDAELAAFVKRVADKLECDGDTLAFCCEPKLDGLAVALVYENGRLVQGATRGDGRTGEDVTLNLRTIRSIPLKLRGDSIPPLIEVRGEVYMRHSGFEALNDRARENGDKVFANPRNAAAGSLRQLDSSIAAARPLEFCAYQVARLEGEDDAHSHSDYLKRLRTLGFRTSPLLDVVKGERGVIDFCHRLGEQRNGLDYDIDGAVIKVDSLRDQRELGFVSRAPRWAIAYKYPAQEQTTTLNDVVFQVGRVGTLTPVAKLEPVQVAGVTVANATLHNMDEIERLGVRIGDTVIVRRAGDVIPQIVGVVESQRPATTRAIEMPEHCPVCGSQTERLEGEVAARCSGGLFCPAQRKEALKHFASRRALDIDGLGEKLIDLLVEREWVKTPADLFRLEAERLAELPRLAEKSANNLVNALEAAKRTTLARFIYAIGIREVGEATAASLARHFGSLQALSEASLEALEAVEDVGPVVARHIHTFFRQPHNQETLEDLQGVGVTWEEVEIAGRPQPLAGQTWVLTGTLESMTRDDGKARLQALGAKVSGSVSKKTAGVVAGEAAGSKLEKAQNLGVEVIDEREFLQRLAHWESASSEDAQPTAPEDTP.

NAD(+) is bound by residues 36-40 (DAEYD), 85-86 (SL), and Glu-118. Catalysis depends on Lys-120, which acts as the N6-AMP-lysine intermediate. NAD(+)-binding residues include Arg-141, Glu-178, Lys-295, and Lys-319. Residues Cys-413, Cys-416, Cys-431, and Cys-437 each contribute to the Zn(2+) site. The 90-residue stretch at 595 to 684 (GRPQPLAGQT…ESASSEDAQP (90 aa)) folds into the BRCT domain.

Belongs to the NAD-dependent DNA ligase family. LigA subfamily. The cofactor is Mg(2+). Mn(2+) is required as a cofactor.

It catalyses the reaction NAD(+) + (deoxyribonucleotide)n-3'-hydroxyl + 5'-phospho-(deoxyribonucleotide)m = (deoxyribonucleotide)n+m + AMP + beta-nicotinamide D-nucleotide.. Functionally, DNA ligase that catalyzes the formation of phosphodiester linkages between 5'-phosphoryl and 3'-hydroxyl groups in double-stranded DNA using NAD as a coenzyme and as the energy source for the reaction. It is essential for DNA replication and repair of damaged DNA. The protein is DNA ligase of Chromohalobacter salexigens (strain ATCC BAA-138 / DSM 3043 / CIP 106854 / NCIMB 13768 / 1H11).